The chain runs to 150 residues: D-aminoacyl-tRNA deacylase (150 aa).

The short motif at 133 to 134 (GP) is the Gly-cisPro motif, important for rejection of L-amino acids element.

It belongs to the DTD family. As to quaternary structure, homodimer.

It is found in the cytoplasm. The catalysed reaction is glycyl-tRNA(Ala) + H2O = tRNA(Ala) + glycine + H(+). It carries out the reaction a D-aminoacyl-tRNA + H2O = a tRNA + a D-alpha-amino acid + H(+). An aminoacyl-tRNA editing enzyme that deacylates mischarged D-aminoacyl-tRNAs. Also deacylates mischarged glycyl-tRNA(Ala), protecting cells against glycine mischarging by AlaRS. Acts via tRNA-based rather than protein-based catalysis; rejects L-amino acids rather than detecting D-amino acids in the active site. By recycling D-aminoacyl-tRNA to D-amino acids and free tRNA molecules, this enzyme counteracts the toxicity associated with the formation of D-aminoacyl-tRNA entities in vivo and helps enforce protein L-homochirality. In Kocuria rhizophila (strain ATCC 9341 / DSM 348 / NBRC 103217 / DC2201), this protein is D-aminoacyl-tRNA deacylase.